The following is a 434-amino-acid chain: RNA-binding protein SRO9 (434 aa).

The segment covering 1-13 has biased composition (low complexity); that stretch reads MSAETAAANTATA. A disordered region spans residues 1-243; that stretch reads MSAETAAANT…FHHNQQHPQQ (243 aa). The segment covering 26 to 41 has biased composition (polar residues); the sequence is SKQVNLTPAPLPTSSP. Ser55 is subject to Phosphoserine. Low complexity predominate over residues 93-124; the sequence is KRSGSKNGASNGNSNKSKNNKTAASSTSSSNA. Positions 125 to 140 are enriched in basic residues; sequence NRKKKHHQHNAKKQQQ. Residue Ser148 is modified to Phosphoserine. A Glycyl lysine isopeptide (Lys-Gly) (interchain with G-Cter in ubiquitin) cross-link involves residue Lys156. Over residues 158-167 the composition is skewed to polar residues; that stretch reads ATSQENGQST. Basic residues predominate over residues 173-195; sequence PHHRNHHHSHHHNSNGPQRRKFH. The span at 196–208 shows a compositional bias: polar residues; sequence NSNNAGMPQNQGF. Residues 218–227 are compositionally biased toward low complexity; it reads RNARNNNNNR. The segment covering 228 to 238 has biased composition (basic residues); that stretch reads SKYHNHFHHNQ. The region spanning 255 to 351 is the HTH La-type RNA-binding domain; the sequence is VQPVLMAINN…KEGDNVTGEA (97 aa). Residues Lys301, Lys342, and Lys352 each participate in a glycyl lysine isopeptide (Lys-Gly) (interchain with G-Cter in ubiquitin) cross-link. The tract at residues 396–434 is disordered; the sequence is SLPPVPQQEEESSTELASQEQETKEDSAPVAAGESESSL. Ser422 bears the Phosphoserine mark.

Interacts with HAP1. Component of the HMC including HAP1, SRO9 and YDJ1.

It is found in the cytoplasm. In terms of biological role, may overlap in function with tropomyosin and may be involved in organization of actin filaments. Acts as a multicopy suppressor of RHO3 mutation. RNA-binding protein which may modulate mRNA translation. Involved in heme regulation of HAP1, as a component of the high-molecular-weight complex (HMC). The sequence is that of RNA-binding protein SRO9 (SRO9) from Saccharomyces cerevisiae (strain ATCC 204508 / S288c) (Baker's yeast).